The following is a 362-amino-acid chain: 3-isopropylmalate dehydrogenase (362 aa).

77 to 88 (GPKWGTGAVRPE) provides a ligand contact to NAD(+). Arg95, Arg105, Arg134, and Asp223 together coordinate substrate. Mg(2+)-binding residues include Asp223, Asp248, and Asp252. 287–298 (GSAPDLPKGKVN) is a binding site for NAD(+).

Belongs to the isocitrate and isopropylmalate dehydrogenases family. Homodimer. Mg(2+) is required as a cofactor. It depends on Mn(2+) as a cofactor.

It is found in the cytoplasm. The enzyme catalyses (2R,3S)-3-isopropylmalate + NAD(+) = 4-methyl-2-oxopentanoate + CO2 + NADH. The protein operates within amino-acid biosynthesis; L-leucine biosynthesis; L-leucine from 3-methyl-2-oxobutanoate: step 3/4. Catalyzes the oxidation of 3-carboxy-2-hydroxy-4-methylpentanoate (3-isopropylmalate) to 3-carboxy-4-methyl-2-oxopentanoate. The product decarboxylates to 4-methyl-2 oxopentanoate. The sequence is that of 3-isopropylmalate dehydrogenase (LEU2) from Zygosaccharomyces bailii.